The primary structure comprises 405 residues: uncharacterized protein (405 aa).

The first 20 residues, 1 to 20 (MKAKLALSIIGLVLASLVAG), serve as a signal peptide directing secretion. Cys-21 bears the N-acetylcysteine mark. A lipid anchor (S-archaeol cysteine) is attached at Cys-21.

The protein belongs to the BMP lipoprotein family.

Its subcellular location is the cell membrane. This is an uncharacterized protein from Pyrococcus horikoshii (strain ATCC 700860 / DSM 12428 / JCM 9974 / NBRC 100139 / OT-3).